The sequence spans 279 residues: MTLADTIFKENIKKIMEQGVFSENARPRYKDGNVANSKYITGSFAEYDLSKGEFPITTLRPIAIKSAIKEVLWIYQDQSNSLELLNDKYNVHYWNDWEVGDTGTIGQRYGAVVKKHNIINKILQQLEANPWNRRNIISLWDYEAFEETDGLLPCAFQTMFDVRRVDGDIYLDATLTQRSNDMLVAHHINAMQYVALQMMIAKHFGWKVGKFFYFINNLHIYDNQFEQAEELLRREPSDCHPRLVLNVPDGTNFFDIKAEDFELLDYNPVKPQLKFDLAI.

DUMP is bound at residue 133–134; the sequence is RR. Catalysis depends on Cys154, which acts as the Nucleophile. Residues 178 to 181, Asn189, and 219 to 221 contribute to the dUMP site; these read RSND and HIY. Asp181 contacts (6R)-5,10-methylene-5,6,7,8-tetrahydrofolate. Residue Ala278 coordinates (6R)-5,10-methylene-5,6,7,8-tetrahydrofolate.

This sequence belongs to the thymidylate synthase family. Bacterial-type ThyA subfamily. Homodimer.

The protein resides in the cytoplasm. It catalyses the reaction dUMP + (6R)-5,10-methylene-5,6,7,8-tetrahydrofolate = 7,8-dihydrofolate + dTMP. Its pathway is pyrimidine metabolism; dTTP biosynthesis. Catalyzes the reductive methylation of 2'-deoxyuridine-5'-monophosphate (dUMP) to 2'-deoxythymidine-5'-monophosphate (dTMP) while utilizing 5,10-methylenetetrahydrofolate (mTHF) as the methyl donor and reductant in the reaction, yielding dihydrofolate (DHF) as a by-product. This enzymatic reaction provides an intracellular de novo source of dTMP, an essential precursor for DNA biosynthesis. This is Thymidylate synthase from Streptococcus sanguinis (strain SK36).